Here is a 203-residue protein sequence, read N- to C-terminus: Urease accessory protein UreG (203 aa).

14 to 21 (GPVGSGKT) contributes to the GTP binding site.

Belongs to the SIMIBI class G3E GTPase family. UreG subfamily. Homodimer. UreD, UreF and UreG form a complex that acts as a GTP-hydrolysis-dependent molecular chaperone, activating the urease apoprotein by helping to assemble the nickel containing metallocenter of UreC. The UreE protein probably delivers the nickel.

The protein localises to the cytoplasm. Functionally, facilitates the functional incorporation of the urease nickel metallocenter. This process requires GTP hydrolysis, probably effectuated by UreG. This chain is Urease accessory protein UreG, found in Rhizobium etli (strain CIAT 652).